The primary structure comprises 318 residues: Biotin synthase (318 aa).

Positions 44–273 (LCGKKFNLCT…EKQIRLAGGR (230 aa)) constitute a Radical SAM core domain. [4Fe-4S] cluster is bound by residues C62, C66, and C69. Residues S106, C138, C198, and R268 each contribute to the [2Fe-2S] cluster site.

The protein belongs to the radical SAM superfamily. Biotin synthase family. Homodimer. Requires [4Fe-4S] cluster as cofactor. The cofactor is [2Fe-2S] cluster.

It carries out the reaction (4R,5S)-dethiobiotin + (sulfur carrier)-SH + 2 reduced [2Fe-2S]-[ferredoxin] + 2 S-adenosyl-L-methionine = (sulfur carrier)-H + biotin + 2 5'-deoxyadenosine + 2 L-methionine + 2 oxidized [2Fe-2S]-[ferredoxin]. Its pathway is cofactor biosynthesis; biotin biosynthesis; biotin from 7,8-diaminononanoate: step 2/2. Functionally, catalyzes the conversion of dethiobiotin (DTB) to biotin by the insertion of a sulfur atom into dethiobiotin via a radical-based mechanism. This chain is Biotin synthase, found in Clostridium botulinum (strain Alaska E43 / Type E3).